A 1256-amino-acid polypeptide reads, in one-letter code: SNF2 domain-containing protein CLASSY 1 (1256 aa).

Disordered stretches follow at residues 269 to 290 and 448 to 467; these read ELRR…EIQP and GNVV…VSRE. Positions 278–290 are enriched in basic and acidic residues; sequence GRPERYGDSEIQP. Positions 451 to 463 are enriched in basic residues; it reads VHKRNGPHSRIRS. The Helicase ATP-binding domain occupies 699-898; it reads DPSSDKIGGC…FNTLCLARPK (200 aa). Residue 712–719 participates in ATP binding; it reads HTPGAGKT. Positions 849 to 852 match the DEAH box motif; sequence DEGH. The Helicase C-terminal domain maps to 1061 to 1222; sequence FVLNLVFRVV…EFVEDPSQWQ (162 aa).

This sequence belongs to the helicase family. As to quaternary structure, interacts with NRPD1, NRPD3 and SHH1.

It is found in the nucleus. Its subcellular location is the nucleoplasm. It localises to the nucleolus. Its function is as follows. Probable chromatin remodeling factor. Required for the initial establishment of DNA methylation and for accumulation of 24-nt siRNAs. May act on RNA templates by remodeling ribonucleoprotein structures and thereby influencing the availability of the RNA to polymerases. The polypeptide is SNF2 domain-containing protein CLASSY 1 (CLSY1) (Arabidopsis thaliana (Mouse-ear cress)).